An 827-amino-acid chain; its full sequence is MTKLSAQVKGSLNITTPGVQIWRIEAMQMVPVPSNSFGSFFDGDCYVIQAIHKTGSNLSYDIHYWIGQASSQDEQGAAAIYTTQMDDFLKGRAVQHREVQGNESDTFRGYFKKGIVIRKGGVASGMKQVETNSYDIQRLLHVKGKRNVVAGEVEMSWKSFNRGDVFLLDLGKLIIQWNGPESNHMERLRGMNLAKEIRDQERGGRTYVGVVDGEDEKASPQLMEIMNHVLGQRKELKAAVADTVVEPALKAALKLYHVSDSEGKVVVREIATQPLTQDLLSHEDCYILDQGGLKIYVWKGKNANAQEKKEAMNQALNFIKAKQYPPSTQVELQNDGAESAVFQQLFQKWTVPNRTTGLGKTHTVGSVAKVEQVKFDAMSMHVQPQVAAQQKMVDDGSGEVQMWRIENLELVPVNTKWLGHFFGGDCYLLLYTYFINEKPHYLLYIWQGSQASQDEITASAYQAVILDQEYNNEPVQIRVPMGKEPPHLMSIFKGCMVVYQGGTSRANSVEPVPSTRLFQVRGTSANNTKAFEVSPRAASLNSNDVFILKTQSCCYLWCGKGCSGDEREMAKMVADTVSRTEKQVVVEGQEPANFWLALGGKAPYASTKRLQEENLVITPRLFECSNQTGRFLATEIPDFNQDDLEEDDVFLLDVWDQVFFWIGKNANEDEKKAAATTVQEYLKTHPGGRDLETPIIVVKQGHEPPTFTGWFLAWDPFKWNNSKSYEDLKAELGNSGDWSQITAELTSSKPEAFNANSNLSSGPLPIFPLEQLVNKPTEELPEGVDPSRREEHLSIEDFTRALGMTPSAFWALPRWKQQNLKKEKGLF.

Residues 1-126 (MTKLSAQVKG…IRKGGVASGM (126 aa)) form a necessary for homodimerization region. The tract at residues 1–734 (MTKLSAQVKG…YEDLKAELGN (734 aa)) is core. The stretch at 27–76 (MQMVPVPSNSFGSFFDGDCYVIQAIHKTGSNLSYDIHYWIGQASSQDEQG) is one Gelsolin-like 1 repeat. LPA/PIP2-binding site regions lie at residues 112 to 119 (KKGIVIRK) and 138 to 146 (RLLHVKGKR). Gelsolin-like repeat units lie at residues 148–188 (VVAG…MERL) and 265–309 (VVVR…QEKK). S366 carries the post-translational modification Phosphoserine. Gelsolin-like repeat units lie at residues 407–457 (NLEL…DEIT), 528–568 (TKAF…DERE), and 631–672 (FLAT…DEKK). At S735 the chain carries Phosphoserine. Residues 735-827 (SGDWSQITAE…QNLKKEKGLF (93 aa)) form a headpiece region. In terms of domain architecture, HP spans 761–827 (SGPLPIFPLE…QNLKKEKGLF (67 aa)). The interval 816–824 (KQQNLKKEK) is LPA/PIP2-binding site 3.

The protein belongs to the villin/gelsolin family. As to quaternary structure, monomer. Homodimer; homodimerization is necessary for actin-bundling. Associates with F-actin; phosphorylation at tyrosine residues decreases the association with F-actin. Interacts (phosphorylated at C-terminus tyrosine phosphorylation sites) with PLCG1 (via the SH2 domains). Interacts (phosphorylated form) with PLCG1; the interaction is enhanced by hepatocyte growth factor (HGF). Phosphorylated on tyrosine residues by SRC. The unphosphorylated form increases the initial rate of actin-nucleating activity, whereas the tyrosine-phosphorylated form inhibits actin-nucleating activity, enhances actin-bundling activity and enhances actin-severing activity by reducing high Ca(2+) requirements. The tyrosine-phosphorylated form does not regulate actin-capping activity. Tyrosine phosphorylation is essential for cell migration: tyrosine phosphorylation sites in the N-terminus half regulate actin reorganization and cell morphology, whereas tyrosine phosphorylation sites in the C-terminus half regulate cell migration via interaction with PLCG1. Tyrosine phosphorylation is induced by epidermal growth factor (EGF) and stimulates cell migration.

It localises to the cytoplasm. The protein resides in the cytoskeleton. It is found in the cell projection. Its subcellular location is the lamellipodium. The protein localises to the ruffle. It localises to the microvillus. The protein resides in the filopodium tip. It is found in the filopodium. In terms of biological role, epithelial cell-specific Ca(2+)-regulated actin-modifying protein that modulates the reorganization of microvillar actin filaments. Plays a role in the actin nucleation, actin filament bundle assembly, actin filament capping and severing. Binds phosphatidylinositol 4,5-bisphosphate (PIP2) and lysophosphatidic acid (LPA); binds LPA with higher affinity than PIP2. Binding to LPA increases its phosphorylation by SRC and inhibits all actin-modifying activities. Binding to PIP2 inhibits actin-capping and -severing activities but enhances actin-bundling activity. Regulates the intestinal epithelial cell morphology, cell invasion, cell migration and apoptosis. Protects against apoptosis induced by dextran sodium sulfate (DSS) in the gastrointestinal epithelium. Appears to regulate cell death by maintaining mitochondrial integrity. Enhances hepatocyte growth factor (HGF)-induced epithelial cell motility, chemotaxis and wound repair. The sequence is that of Villin-1 (VIL1) from Bos taurus (Bovine).